Reading from the N-terminus, the 418-residue chain is Oxalate:formate antiporter (418 aa).

Helical transmembrane passes span 17–37 (WFYL…QYSW), 48–68 (LGVS…IQAG), 84–104 (IPLM…GMVD), 108–128 (ALYA…GIAM), 141–161 (LASG…LPLI), 172–192 (AAFM…AFVI), 222–242 (FWVL…LVAN), 250–270 (LGLA…FNGG), 288–308 (MSVV…IAAL), 311–331 (VAFI…YALF), 350–370 (FFWA…AAIA), and 378–398 (AFLI…FVIP). An oxalate-binding site is contributed by lysine 355.

It belongs to the major facilitator superfamily. OFA (TC 2.A.1.11) family. As to quaternary structure, monomer.

Its subcellular location is the cell inner membrane. Anion transporter that carries out the exchange of divalent oxalate with monovalent formate, the product of oxalate decarboxylation, at the plasma membrane, and in doing so catalyzes the vectorial portion of a proton-motive metabolic cycle that drives ATP synthesis. In Oxalobacter formigenes, this protein is Oxalate:formate antiporter (oxlT).